The sequence spans 141 residues: Nucleoside diphosphate kinase (141 aa).

6 residues coordinate ATP: Lys-11, Phe-59, Arg-87, Thr-93, Arg-104, and Asn-114. His-117 (pros-phosphohistidine intermediate) is an active-site residue.

It belongs to the NDK family. In terms of assembly, homotetramer. The cofactor is Mg(2+).

The protein localises to the cytoplasm. It catalyses the reaction a 2'-deoxyribonucleoside 5'-diphosphate + ATP = a 2'-deoxyribonucleoside 5'-triphosphate + ADP. The catalysed reaction is a ribonucleoside 5'-diphosphate + ATP = a ribonucleoside 5'-triphosphate + ADP. Its function is as follows. Major role in the synthesis of nucleoside triphosphates other than ATP. The ATP gamma phosphate is transferred to the NDP beta phosphate via a ping-pong mechanism, using a phosphorylated active-site intermediate. This chain is Nucleoside diphosphate kinase, found in Burkholderia ambifaria (strain MC40-6).